The chain runs to 238 residues: Large ribosomal subunit protein uL1 (238 aa).

It belongs to the universal ribosomal protein uL1 family. In terms of assembly, part of the 50S ribosomal subunit.

Its function is as follows. Binds directly to 23S rRNA. The L1 stalk is quite mobile in the ribosome, and is involved in E site tRNA release. In terms of biological role, protein L1 is also a translational repressor protein, it controls the translation of the L11 operon by binding to its mRNA. The protein is Large ribosomal subunit protein uL1 of Picosynechococcus sp. (strain ATCC 27264 / PCC 7002 / PR-6) (Agmenellum quadruplicatum).